A 528-amino-acid polypeptide reads, in one-letter code: Sodium-dependent lysophosphatidylcholine symporter 1 (528 aa).

Residues 1 to 37 are Cytoplasmic-facing; sequence MAGGGGAERVRVGAAAAGLLPPSCRQPRRRESRERLS. Residues 38–66 form a helical membrane-spanning segment; the sequence is VCSKLCYAVGGAPYQTTGCALGFFLQIYL. The Extracellular segment spans residues 67–73; that stretch reads LDVAQLD. The chain crosses the membrane as a helical span at residues 74 to 99; the sequence is PFYASIILFVGRAWDAITDPMVGFFI. Residues 100–109 lie on the Cytoplasmic side of the membrane; the sequence is SKTPWTRFGR. A helical membrane pass occupies residues 110-129; it reads LMPWIIFSTPFAVISYFLIW. Over 130 to 138 the chain is Extracellular; the sequence is FVPDISTGQ. Residues 139–161 traverse the membrane as a helical segment; the sequence is VMWYLIFYCIFQTLVTCFHVPYS. The Cytoplasmic segment spans residues 162–176; that stretch reads ALTMFISREQSERDS. A helical membrane pass occupies residues 177–199; the sequence is ATAYRMTVEVLGTVLGTAIQGQI. Residues 200–241 are Extracellular-facing; sequence VGKAVTPCIENPPFLSETNFSVAIRNVNMTHYTGSLADTRNA. A disulfide bridge connects residues Cys207 and Cys460. Asn218 and Asn227 each carry an N-linked (GlcNAc...) asparagine glycan. Residues 242 to 263 traverse the membrane as a helical segment; the sequence is YMVAAGVIGGLYILCAVILSVG. The Cytoplasmic portion of the chain corresponds to 264-295; that stretch reads VREKRESSELQSDEPVSFFRGLKLVMNHGAYI. Residues 296-319 form a helical membrane-spanning segment; the sequence is KLITGFLFTSLAFMLLEGNFALFC. Residues 320 to 328 lie on the Extracellular side of the membrane; the sequence is TYTLGFRNE. The helical transmembrane segment at 329–351 threads the bilayer; it reads FQNILLAIMLSATLTIPFWQWFL. At 352–355 the chain is on the cytoplasmic side; the sequence is TRFG. Residues 356–376 traverse the membrane as a helical segment; sequence KKTAVYVGISSAVPFLITVVV. Residues 377 to 381 lie on the Extracellular side of the membrane; that stretch reads LDSNL. The helical transmembrane segment at 382–404 threads the bilayer; it reads VVTYIVAVAAGISVAAAFLLPWS. Over 405–427 the chain is Cytoplasmic; that stretch reads MLPDVIDDFKLQHPESRGHEAIF. Residues 428 to 450 form a helical membrane-spanning segment; the sequence is FSFYVFFTKFTSGVSLGISTLSL. Topologically, residues 451 to 467 are extracellular; the sequence is DFAGYQTRGCSQPSEVN. Residues 468–490 form a helical membrane-spanning segment; sequence ITLKLLVSAVPVGLILLGLLLFK. Over 491–528 the chain is Cytoplasmic; the sequence is LYPIDEEKRRENKKALQDLREESNSSSESDSTELANIV. Basic and acidic residues predominate over residues 503 to 513; the sequence is KKALQDLREES. Residues 503–528 are disordered; the sequence is KKALQDLREESNSSSESDSTELANIV. Over residues 514-528 the composition is skewed to low complexity; sequence NSSSESDSTELANIV.

The protein belongs to the major facilitator superfamily.

Its subcellular location is the cell membrane. The protein localises to the endoplasmic reticulum membrane. The catalysed reaction is a 1-acyl-sn-glycero-3-phosphocholine(in) + Na(+)(in) = a 1-acyl-sn-glycero-3-phosphocholine(out) + Na(+)(out). It carries out the reaction 1-(4Z,7Z,10Z,13Z,16Z,19Z-docosahexaenoyl)-sn-glycero-3-phosphocholine(in) + Na(+)(in) = 1-(4Z,7Z,10Z,13Z,16Z,19Z-docosahexaenoyl)-sn-glycero-3-phosphocholine(out) + Na(+)(out). The enzyme catalyses 1-(9Z-octadecenoyl)-sn-glycero-3-phosphocholine(in) + Na(+)(in) = 1-(9Z-octadecenoyl)-sn-glycero-3-phosphocholine(out) + Na(+)(out). It catalyses the reaction 1-hexadecanoyl-sn-glycero-3-phosphocholine(in) + Na(+)(in) = 1-hexadecanoyl-sn-glycero-3-phosphocholine(out) + Na(+)(out). The catalysed reaction is a 1-acyl-sn-glycero-3-phosphoethanolamine(in) + Na(+)(in) = a 1-acyl-sn-glycero-3-phosphoethanolamine(out) + Na(+)(out). In terms of biological role, sodium-dependent lysophosphatidylcholine (LPC) symporter, which plays an essential role for blood-brain barrier formation and function. Specifically expressed in endothelium of the blood-brain barrier of micro-vessels and transports LPC into the brain. Transport of LPC is essential because it constitutes the major mechanism by which docosahexaenoic acid (DHA), an omega-3 fatty acid that is essential for normal brain growth and cognitive function, enters the brain. Transports LPC carrying long-chain fatty acids such LPC oleate and LPC palmitate with a minimum acyl chain length of 14 carbons. Does not transport docosahexaenoic acid in unesterified fatty acid. This chain is Sodium-dependent lysophosphatidylcholine symporter 1, found in Gallus gallus (Chicken).